Consider the following 323-residue polypeptide: tRNA dimethylallyltransferase (323 aa).

12-19 (GPTAAGKT) is a binding site for ATP. A substrate-binding site is contributed by 14–19 (TAAGKT). 2 interaction with substrate tRNA regions span residues 37-40 (DSAL) and 161-165 (QRLMR).

It belongs to the IPP transferase family. As to quaternary structure, monomer. Requires Mg(2+) as cofactor.

It catalyses the reaction adenosine(37) in tRNA + dimethylallyl diphosphate = N(6)-dimethylallyladenosine(37) in tRNA + diphosphate. Its function is as follows. Catalyzes the transfer of a dimethylallyl group onto the adenine at position 37 in tRNAs that read codons beginning with uridine, leading to the formation of N6-(dimethylallyl)adenosine (i(6)A). This Pseudomonas aeruginosa (strain LESB58) protein is tRNA dimethylallyltransferase.